A 200-amino-acid chain; its full sequence is dTDP-4-dehydrorhamnose 3,5-epimerase (200 aa).

Substrate contacts are provided by residues Arg21, Glu26, 45 to 47 (QVN), and Arg57. The Proton acceptor role is filled by His60. Substrate is bound by residues Lys70 and His116. Tyr129 functions as the Proton donor in the catalytic mechanism. Residues Glu140 and Lys165 each contribute to the substrate site.

The protein belongs to the dTDP-4-dehydrorhamnose 3,5-epimerase family.

The catalysed reaction is dTDP-4-dehydro-6-deoxy-alpha-D-glucose = dTDP-4-dehydro-beta-L-rhamnose. It functions in the pathway carbohydrate biosynthesis; dTDP-L-rhamnose biosynthesis. Its pathway is antibiotic biosynthesis; streptomycin biosynthesis. Involved in the biosynthesis of the dihydrostreptose moiety of streptomycin. Catalyzes the epimerization of the C3' and C5'positions of dTDP-6-deoxy-D-xylo-4-hexulose, forming dTDP-6-deoxy-L-lyxo-4-hexulose. This is dTDP-4-dehydrorhamnose 3,5-epimerase from Streptomyces griseus.